A 199-amino-acid chain; its full sequence is FMN-dependent NADH:quinone oxidoreductase 2 (199 aa).

FMN-binding positions include Ser10, 16 to 18, and 96 to 99; these read SVS and MYNF.

Belongs to the azoreductase type 1 family. As to quaternary structure, homodimer. Requires FMN as cofactor.

It carries out the reaction 2 a quinone + NADH + H(+) = 2 a 1,4-benzosemiquinone + NAD(+). The catalysed reaction is N,N-dimethyl-1,4-phenylenediamine + anthranilate + 2 NAD(+) = 2-(4-dimethylaminophenyl)diazenylbenzoate + 2 NADH + 2 H(+). Its function is as follows. Quinone reductase that provides resistance to thiol-specific stress caused by electrophilic quinones. In terms of biological role, also exhibits azoreductase activity. Catalyzes the reductive cleavage of the azo bond in aromatic azo compounds to the corresponding amines. This chain is FMN-dependent NADH:quinone oxidoreductase 2, found in Pseudomonas putida (strain ATCC 47054 / DSM 6125 / CFBP 8728 / NCIMB 11950 / KT2440).